We begin with the raw amino-acid sequence, 226 residues long: ATP synthase subunit a (226 aa).

5 consecutive transmembrane segments (helical) span residues 18 to 38 (LSLNWLSTFLGLFLIPVSYWL), 74 to 94 (FISLFSLIMFNNFLGLFPYIF), 100 to 120 (LTLTLALAFPLWLSFMLYGWI), 158 to 180 (LAVRLTANMIAGHLLLTLLGNTG), and 197 to 217 (IALLVLESAVAIIQSYVFAVL).

The protein belongs to the ATPase A chain family. As to quaternary structure, F-type ATPases have 2 components, CF(1) - the catalytic core - and CF(0) - the membrane proton channel. CF(1) has five subunits: alpha(3), beta(3), gamma(1), delta(1), epsilon(1). CF(0) has three main subunits: a, b and c.

The protein localises to the mitochondrion inner membrane. In terms of biological role, mitochondrial membrane ATP synthase (F(1)F(0) ATP synthase or Complex V) produces ATP from ADP in the presence of a proton gradient across the membrane which is generated by electron transport complexes of the respiratory chain. F-type ATPases consist of two structural domains, F(1) - containing the extramembraneous catalytic core and F(0) - containing the membrane proton channel, linked together by a central stalk and a peripheral stalk. During catalysis, ATP synthesis in the catalytic domain of F(1) is coupled via a rotary mechanism of the central stalk subunits to proton translocation. Key component of the proton channel; it may play a direct role in the translocation of protons across the membrane. This chain is ATP synthase subunit a (mt:ATPase6), found in Anopheles gambiae (African malaria mosquito).